Consider the following 384-residue polypeptide: MSEQLVTPENVTTKDGKINLLDLNRQQMREFFKDLGEKPFRADQVMKWMYHYCCDNFDEMTDINKVLRGKLKEVAEIRAPEVVEEQRSSDGTIKWAIAVGDQRVETVYIPEDDRATLCVSSQVGCALECKFCSTAQQGFNRNLRVSEIIGQVWRAAKIVGAAKVTGQRPITNVVMMGMGEPLLNLNNVVPAMEIMLDDFGFGLSKRRVTLSTSGVVPALDKLGDMIDVALAISLHAPNDEIRDEIVPINKKYNIETFLAAVRRYLEKSNANQGRVTIEYVMLDHVNDGTEHAHQLAELLKDTPCKINLIPWNPFPGAPYGRSSNSRIDRFSKVLMSYGFTTIVRKTRGDDIDAACGQLAGDVIDRTKRTLRKRMQGEAIDIKAV.

Catalysis depends on glutamate 105, which acts as the Proton acceptor. The Radical SAM core domain occupies 111–350; the sequence is EDDRATLCVS…TIVRKTRGDD (240 aa). Cysteine 118 and cysteine 355 are oxidised to a cystine. The [4Fe-4S] cluster site is built by cysteine 125, cysteine 129, and cysteine 132. Residues 179 to 180, serine 211, 233 to 235, and asparagine 312 contribute to the S-adenosyl-L-methionine site; these read GE and SLH. Residue cysteine 355 is the S-methylcysteine intermediate of the active site.

Belongs to the radical SAM superfamily. RlmN family. The cofactor is [4Fe-4S] cluster.

The protein localises to the cytoplasm. The enzyme catalyses adenosine(2503) in 23S rRNA + 2 reduced [2Fe-2S]-[ferredoxin] + 2 S-adenosyl-L-methionine = 2-methyladenosine(2503) in 23S rRNA + 5'-deoxyadenosine + L-methionine + 2 oxidized [2Fe-2S]-[ferredoxin] + S-adenosyl-L-homocysteine. It carries out the reaction adenosine(37) in tRNA + 2 reduced [2Fe-2S]-[ferredoxin] + 2 S-adenosyl-L-methionine = 2-methyladenosine(37) in tRNA + 5'-deoxyadenosine + L-methionine + 2 oxidized [2Fe-2S]-[ferredoxin] + S-adenosyl-L-homocysteine. Functionally, specifically methylates position 2 of adenine 2503 in 23S rRNA and position 2 of adenine 37 in tRNAs. m2A2503 modification seems to play a crucial role in the proofreading step occurring at the peptidyl transferase center and thus would serve to optimize ribosomal fidelity. In Shigella boydii serotype 18 (strain CDC 3083-94 / BS512), this protein is Dual-specificity RNA methyltransferase RlmN.